The primary structure comprises 745 residues: Phosphoribosylformylglycinamidine synthase subunit PurL (745 aa).

The active site involves H47. ATP contacts are provided by Y50 and K90. E92 serves as a coordination point for Mg(2+). Substrate-binding positions include S93 to H96 and R115. H94 (proton acceptor) is an active-site residue. D116 is a binding site for Mg(2+). Residue Q240 participates in substrate binding. D268 contacts Mg(2+). E312–Q314 contributes to the substrate binding site. ATP-binding residues include N501 and G538. A Mg(2+)-binding site is contributed by N539. A substrate-binding site is contributed by S541.

This sequence belongs to the FGAMS family. Monomer. Part of the FGAM synthase complex composed of 1 PurL, 1 PurQ and 2 PurS subunits.

Its subcellular location is the cytoplasm. It catalyses the reaction N(2)-formyl-N(1)-(5-phospho-beta-D-ribosyl)glycinamide + L-glutamine + ATP + H2O = 2-formamido-N(1)-(5-O-phospho-beta-D-ribosyl)acetamidine + L-glutamate + ADP + phosphate + H(+). It functions in the pathway purine metabolism; IMP biosynthesis via de novo pathway; 5-amino-1-(5-phospho-D-ribosyl)imidazole from N(2)-formyl-N(1)-(5-phospho-D-ribosyl)glycinamide: step 1/2. Part of the phosphoribosylformylglycinamidine synthase complex involved in the purines biosynthetic pathway. Catalyzes the ATP-dependent conversion of formylglycinamide ribonucleotide (FGAR) and glutamine to yield formylglycinamidine ribonucleotide (FGAM) and glutamate. The FGAM synthase complex is composed of three subunits. PurQ produces an ammonia molecule by converting glutamine to glutamate. PurL transfers the ammonia molecule to FGAR to form FGAM in an ATP-dependent manner. PurS interacts with PurQ and PurL and is thought to assist in the transfer of the ammonia molecule from PurQ to PurL. This is Phosphoribosylformylglycinamidine synthase subunit PurL from Leptospira interrogans serogroup Icterohaemorrhagiae serovar Lai (strain 56601).